Consider the following 114-residue polypeptide: Large ribosomal subunit protein bL19 (114 aa).

Belongs to the bacterial ribosomal protein bL19 family.

Functionally, this protein is located at the 30S-50S ribosomal subunit interface and may play a role in the structure and function of the aminoacyl-tRNA binding site. The polypeptide is Large ribosomal subunit protein bL19 (Halalkalibacterium halodurans (strain ATCC BAA-125 / DSM 18197 / FERM 7344 / JCM 9153 / C-125) (Bacillus halodurans)).